The chain runs to 377 residues: Cytochrome c peroxidase, mitochondrial (377 aa).

The N-terminal 32 residues, 1-32 (MSFRAPNLIRSTVGRRAGQTLNLRSQVIRRRF), are a transit peptide targeting the mitochondrion. The active-site Proton acceptor is His-138. His-261 provides a ligand contact to heme b. The Tryptophan radical intermediate role is filled by Trp-277.

This sequence belongs to the peroxidase family. Cytochrome c peroxidase subfamily. In terms of assembly, forms a one-to-one complex with cytochrome c. Interacts with MID1 (via C-terminus); the interaction may contribute to cellular detoxification of radicals. The cofactor is heme b.

Its subcellular location is the mitochondrion matrix. It localises to the mitochondrion intermembrane space. It carries out the reaction 2 Fe(II)-[cytochrome c] + H2O2 + 2 H(+) = 2 Fe(III)-[cytochrome c] + 2 H2O. In terms of biological role, destroys radicals which are normally produced within the cells and which are toxic to biological systems. The sequence is that of Cytochrome c peroxidase, mitochondrial (CCP1) from Cryptococcus neoformans var. grubii serotype A (strain H99 / ATCC 208821 / CBS 10515 / FGSC 9487) (Filobasidiella neoformans var. grubii).